The chain runs to 507 residues: Protein DETOXIFICATION 41 (507 aa).

Over 1 to 62 the chain is Cytoplasmic; sequence MSSTETYEPL…KLLWTLSGAS (62 aa). Residues 63 to 83 traverse the membrane as a helical segment; the sequence is IVVSVLNYMLSFVTVMFTGHL. Residues 84–92 are Vacuolar-facing; that stretch reads GSLQLAGAS. Residues 93–113 form a helical membrane-spanning segment; the sequence is IATVGIQGLAYGIMLGMASAV. Residues 114–137 are Cytoplasmic-facing; it reads QTVCGQAYGARQYSSMGIICQRAM. Residues 138–158 traverse the membrane as a helical segment; sequence VLHLAAAVFLTFLYWYSGPIL. Residues 159 to 170 are Vacuolar-facing; that stretch reads KTMGQSVAIAHE. A helical membrane pass occupies residues 171 to 191; that stretch reads GQIFARGMIPQIYAFALACPM. The Cytoplasmic segment spans residues 192-202; it reads QRFLQAQNIVN. The chain crosses the membrane as a helical span at residues 203 to 223; the sequence is PLAYMSLGVFLLHTLLTWLVT. Position 224 (Asn-224) is a topological domain, vacuolar. Residues 225-245 form a helical membrane-spanning segment; it reads VLDFGLLGAALILSFSWWLLV. Over 246–283 the chain is Cytoplasmic; it reads AVNGMYILMSPNCKETWTGFSTRAFRGIWPYFKLTVAS. The chain crosses the membrane as a helical span at residues 284–304; sequence AVMLCLEIWYNQGLVIISGLL. Topologically, residues 305-312 are vacuolar; that stretch reads SNPTISLD. The helical transmembrane segment at 313 to 333 threads the bilayer; that stretch reads AISICMYYLNWDMQFMLGLSA. Over 334–355 the chain is Cytoplasmic; the sequence is AISVRVSNELGAGNPRVAMLSV. A helical membrane pass occupies residues 356–376; it reads VVVNITTVLISSVLCVIVLVF. Residues 377–389 are Vacuolar-facing; sequence RVGLSKAFTSDAE. A helical membrane pass occupies residues 390 to 410; the sequence is VIAAVSDLFPLLAVSIFLNGI. The Cytoplasmic portion of the chain corresponds to 411-425; that stretch reads QPILSGVAIGSGWQA. The helical transmembrane segment at 426-446 threads the bilayer; it reads VVAYVNLVTYYVIGLPIGCVL. Topologically, residues 447–453 are vacuolar; it reads GFKTSLG. The chain crosses the membrane as a helical span at residues 454–474; sequence VAGIWWGMIAGVILQTLTLIV. Residues 475–507 lie on the Cytoplasmic side of the membrane; that stretch reads LTLKTNWTSEVENAAQRVKTSATENQEMANAGV.

It belongs to the multi antimicrobial extrusion (MATE) (TC 2.A.66.1) family. In terms of tissue distribution, expressed in reproductive tissues, from buds to siliques. Restricted to the endothelium layer of the ovule and the seed coat.

It localises to the vacuole membrane. Its pathway is secondary metabolite biosynthesis; flavonoid biosynthesis. Functionally, acts as a flavonoid/H(+)-antiporter that control the vacuolar sequestration of flavonoids in the seed coat endothelium. Could transport the anthocyanin cyanidin-3-O-glucoside and epicatechin 3'-O-glucoside in vitro. The sequence is that of Protein DETOXIFICATION 41 from Arabidopsis thaliana (Mouse-ear cress).